The primary structure comprises 99 residues: Protein SPIRAL1-like 5 (99 aa).

Positions 1-12 (MSRGGSFGGGQS) are enriched in gly residues. Residues 1–99 (MSRGGSFGGG…SSLGYLFGDK (99 aa)) form a disordered region. The span at 27–39 (TPAPPVAPKPAPP) shows a compositional bias: pro residues. A compositionally biased stretch (polar residues) spans 56 to 73 (KISNNNYQRVQGQNSGNF). Residue Ser58 is modified to Phosphoserine.

It belongs to the SPIRAL1 family. In terms of tissue distribution, expressed exclusively in stems and flowers.

Acts redundantly with SPR1 in maintaining the cortical microtubules organization essential for anisotropic cell growth. The sequence is that of Protein SPIRAL1-like 5 (SP1L5) from Arabidopsis thaliana (Mouse-ear cress).